We begin with the raw amino-acid sequence, 206 residues long: Large ribosomal subunit protein uL4 (206 aa).

Belongs to the universal ribosomal protein uL4 family. As to quaternary structure, part of the 50S ribosomal subunit.

One of the primary rRNA binding proteins, this protein initially binds near the 5'-end of the 23S rRNA. It is important during the early stages of 50S assembly. It makes multiple contacts with different domains of the 23S rRNA in the assembled 50S subunit and ribosome. In terms of biological role, forms part of the polypeptide exit tunnel. This is Large ribosomal subunit protein uL4 from Cereibacter sphaeroides (strain KD131 / KCTC 12085) (Rhodobacter sphaeroides).